The sequence spans 239 residues: Pyridoxine 5'-phosphate synthase (239 aa).

N7 is a binding site for 3-amino-2-oxopropyl phosphate. 9 to 10 (DH) contributes to the 1-deoxy-D-xylulose 5-phosphate binding site. 3-amino-2-oxopropyl phosphate is bound at residue R18. H43 acts as the Proton acceptor in catalysis. Residues R45 and H50 each coordinate 1-deoxy-D-xylulose 5-phosphate. Catalysis depends on E70, which acts as the Proton acceptor. A 1-deoxy-D-xylulose 5-phosphate-binding site is contributed by T100. The active-site Proton donor is H191. Residues G192 and 213 to 214 (GH) each bind 3-amino-2-oxopropyl phosphate.

Belongs to the PNP synthase family. As to quaternary structure, homooctamer; tetramer of dimers.

The protein localises to the cytoplasm. The enzyme catalyses 3-amino-2-oxopropyl phosphate + 1-deoxy-D-xylulose 5-phosphate = pyridoxine 5'-phosphate + phosphate + 2 H2O + H(+). Its pathway is cofactor biosynthesis; pyridoxine 5'-phosphate biosynthesis; pyridoxine 5'-phosphate from D-erythrose 4-phosphate: step 5/5. Its function is as follows. Catalyzes the complicated ring closure reaction between the two acyclic compounds 1-deoxy-D-xylulose-5-phosphate (DXP) and 3-amino-2-oxopropyl phosphate (1-amino-acetone-3-phosphate or AAP) to form pyridoxine 5'-phosphate (PNP) and inorganic phosphate. This chain is Pyridoxine 5'-phosphate synthase, found in Geobacter sulfurreducens (strain ATCC 51573 / DSM 12127 / PCA).